A 340-amino-acid polypeptide reads, in one-letter code: Cytosolic Fe-S cluster assembly factor NBP35 (340 aa).

4 residues coordinate [4Fe-4S] cluster: cysteine 31, cysteine 45, cysteine 48, and cysteine 54. ATP is bound at residue 84-91 (GKGGVGKS). [4Fe-4S] cluster is bound by residues cysteine 257 and cysteine 260.

It belongs to the Mrp/NBP35 ATP-binding proteins family. NUBP1/NBP35 subfamily. Heterotetramer of 2 NBP35 and 2 CFD1 chains. [4Fe-4S] cluster is required as a cofactor.

It is found in the cytoplasm. Its function is as follows. Component of the cytosolic iron-sulfur (Fe/S) protein assembly (CIA) machinery. Required for maturation of extramitochondrial Fe-S proteins. The NBP35-CFD1 heterotetramer forms a Fe-S scaffold complex, mediating the de novo assembly of an Fe-S cluster and its transfer to target apoproteins. The sequence is that of Cytosolic Fe-S cluster assembly factor NBP35 from Phaeosphaeria nodorum (strain SN15 / ATCC MYA-4574 / FGSC 10173) (Glume blotch fungus).